Here is a 253-residue protein sequence, read N- to C-terminus: Tetraspanin-3 (253 aa).

Topologically, residues Met1–Thr11 are cytoplasmic. The helical transmembrane segment at Val12 to Ala32 threads the bilayer. Over Tyr33–Thr50 the chain is Extracellular. The chain crosses the membrane as a helical span at residues Leu51–Gly71. Topologically, residues Cys72–Thr85 are cytoplasmic. Residues Phe86 to Val106 form a helical membrane-spanning segment. At Tyr107 to Val212 the chain is on the extracellular side. N-linked (GlcNAc...) asparagine glycosylation is found at Asn127, Asn152, Asn167, and Asn183. The helical transmembrane segment at Ile213–Val233 threads the bilayer. Topologically, residues Leu234 to Ala253 are cytoplasmic.

It belongs to the tetraspanin (TM4SF) family. As to quaternary structure, interacts with claudin-11/CLDN11 and integrins.

It localises to the membrane. Regulates the proliferation and migration of oligodendrocytes, a process essential for normal myelination and repair. The chain is Tetraspanin-3 (TSPAN3) from Homo sapiens (Human).